A 694-amino-acid chain; its full sequence is Elongation factor G 2 (694 aa).

Positions 5-280 (SKYRNIGIFA…AVVDYLPSPT (276 aa)) constitute a tr-type G domain. Residues 14-21 (AHVDAGKT), 78-82 (DTPGH), and 132-135 (NKLD) each bind GTP.

It belongs to the TRAFAC class translation factor GTPase superfamily. Classic translation factor GTPase family. EF-G/EF-2 subfamily.

It is found in the cytoplasm. Functionally, catalyzes the GTP-dependent ribosomal translocation step during translation elongation. During this step, the ribosome changes from the pre-translocational (PRE) to the post-translocational (POST) state as the newly formed A-site-bound peptidyl-tRNA and P-site-bound deacylated tRNA move to the P and E sites, respectively. Catalyzes the coordinated movement of the two tRNA molecules, the mRNA and conformational changes in the ribosome. This is Elongation factor G 2 from Pseudoalteromonas translucida (strain TAC 125).